The sequence spans 1502 residues: Clustered mitochondria protein homolog (1502 aa).

Disordered stretches follow at residues 1-62 (MSES…EPLD), 571-615 (AQAE…NPMM), 755-799 (AEAE…EEDR), 1054-1085 (KDQE…GETV), 1381-1403 (ARER…RLGG), and 1429-1502 (GQGG…GAKR). Residues 7 to 35 (AAAQNGQAEEQQLQQQLDEQQQLEEQQQL) are compositionally biased toward low complexity. The segment covering 53 to 62 (KPKDSTEPLD) has biased composition (basic and acidic residues). The region spanning 399–693 (EILRTQLAFL…RLAPVDVEWL (295 aa)) is the Clu domain. Residues 575 to 586 (TEAEAETADAVE) are compositionally biased toward acidic residues. Over residues 587–606 (GEQKKEDWVDVEKPTEKSGS) the composition is skewed to basic and acidic residues. Residues 781–792 (EEQSAAASAAAA) show a composition bias toward low complexity. The span at 1054–1069 (KDQEEEENKREENIKS) shows a compositional bias: basic and acidic residues. A compositionally biased stretch (low complexity) spans 1429–1451 (GQGGNPSANAAAATAGQGEQANG). Basic and acidic residues predominate over residues 1462–1471 (RGTESLEELV). Residues 1486–1502 (KRGKNALRGKRRTGAKR) show a composition bias toward basic residues.

This sequence belongs to the CLU family. In terms of assembly, may associate with the eukaryotic translation initiation factor 3 (eIF-3) complex.

It localises to the cytoplasm. Its function is as follows. mRNA-binding protein involved in proper cytoplasmic distribution of mitochondria. The sequence is that of Clustered mitochondria protein homolog from Cryptococcus neoformans var. neoformans serotype D (strain B-3501A) (Filobasidiella neoformans).